Here is a 144-residue protein sequence, read N- to C-terminus: Ribonuclease VapC37 (144 aa).

The PINc domain maps to 3–137 (IVDANVLLYA…DFGRFEGVRW (135 aa)). Residues D5 and D90 each coordinate Mg(2+).

The protein belongs to the PINc/VapC protein family. Mg(2+) serves as cofactor.

It localises to the secreted. In terms of biological role, probable toxic component of a type II toxin-antitoxin (TA) system. An RNase. Upon expression in M.smegmatis inhibits colony formation. The putative cognate antitoxin is VapB37. The polypeptide is Ribonuclease VapC37 (Mycobacterium tuberculosis (strain ATCC 25618 / H37Rv)).